We begin with the raw amino-acid sequence, 269 residues long: Putative pyruvate, phosphate dikinase regulatory protein (269 aa).

147–154 (GVSRTSKT) lines the ADP pocket.

This sequence belongs to the pyruvate, phosphate/water dikinase regulatory protein family. PDRP subfamily.

The enzyme catalyses N(tele)-phospho-L-histidyl/L-threonyl-[pyruvate, phosphate dikinase] + ADP = N(tele)-phospho-L-histidyl/O-phospho-L-threonyl-[pyruvate, phosphate dikinase] + AMP + H(+). The catalysed reaction is N(tele)-phospho-L-histidyl/O-phospho-L-threonyl-[pyruvate, phosphate dikinase] + phosphate + H(+) = N(tele)-phospho-L-histidyl/L-threonyl-[pyruvate, phosphate dikinase] + diphosphate. Bifunctional serine/threonine kinase and phosphorylase involved in the regulation of the pyruvate, phosphate dikinase (PPDK) by catalyzing its phosphorylation/dephosphorylation. The polypeptide is Putative pyruvate, phosphate dikinase regulatory protein (Geotalea uraniireducens (strain Rf4) (Geobacter uraniireducens)).